Reading from the N-terminus, the 193-residue chain is Xanthine phosphoribosyltransferase (193 aa).

Positions 20 and 27 each coordinate xanthine. A128–A132 contributes to the 5-phospho-alpha-D-ribose 1-diphosphate binding site. Xanthine is bound at residue K156.

It belongs to the purine/pyrimidine phosphoribosyltransferase family. Xpt subfamily. In terms of assembly, homodimer.

The protein resides in the cytoplasm. It carries out the reaction XMP + diphosphate = xanthine + 5-phospho-alpha-D-ribose 1-diphosphate. It functions in the pathway purine metabolism; XMP biosynthesis via salvage pathway; XMP from xanthine: step 1/1. Functionally, converts the preformed base xanthine, a product of nucleic acid breakdown, to xanthosine 5'-monophosphate (XMP), so it can be reused for RNA or DNA synthesis. The sequence is that of Xanthine phosphoribosyltransferase from Staphylococcus haemolyticus (strain JCSC1435).